Here is a 120-residue protein sequence, read N- to C-terminus: MEQLTKNQAVATSQEAVQNQNEPQLRDENAHNDKSVHGVLNPTYQAGLRRDAVQPDIEAERKKRDEIEAGKSYCSRRFGGATCDDKSAQIYARFDKNDWRIQPAEFYRFHDAEVNTFGYF.

A compositionally biased stretch (polar residues) spans 1–23; the sequence is MEQLTKNQAVATSQEAVQNQNEP. The interval 1–64 is disordered; the sequence is MEQLTKNQAV…PDIEAERKKR (64 aa). Composition is skewed to basic and acidic residues over residues 24–36 and 48–64; these read QLRD…DKSV and LRRD…RKKR.

Belongs to the microviridae B protein family. Component of the procapsid complex composed of 60 copies of the internally located B, 240 copies of the external scaffolding protein D, 60 copies of each of the viral structural proteins F and G proteins, and 12 copies of H. Post-translationally, the proteolytic cleavage of the internal scaffolding protein B releases the scaffold protein in order to continue virion assembly.

The protein resides in the host cytoplasm. Functionally, participates in the assembly of the viral procapsid in the cytoplasm. Forms first a 12S pre-assembly complex with protein H, and F and G pentamers, then twelve 12S complexes are joined by the D protein to form the procapsid. Internal scaffold protein B is released from the procapsid upon genome packaging. Autoproteolytic activity cleaves protein B and probably facilitates its removal through the pores of the procapsid. The protein is Internal scaffolding protein B (B) of Enterobacteria phage phiX174 (Isolate Sanger).